Consider the following 364-residue polypeptide: tRNA N6-adenosine threonylcarbamoyltransferase (364 aa).

Residues H115 and H119 each contribute to the Fe cation site. Substrate-binding positions include 137-141 (LVSGG), D170, G183, and N288. D316 provides a ligand contact to Fe cation. A disordered region spans residues 341–364 (PRSRWPLDEKSAPLIGTGRRGTKA).

This sequence belongs to the KAE1 / TsaD family. Fe(2+) serves as cofactor.

It is found in the cytoplasm. It carries out the reaction L-threonylcarbamoyladenylate + adenosine(37) in tRNA = N(6)-L-threonylcarbamoyladenosine(37) in tRNA + AMP + H(+). Its function is as follows. Required for the formation of a threonylcarbamoyl group on adenosine at position 37 (t(6)A37) in tRNAs that read codons beginning with adenine. Is involved in the transfer of the threonylcarbamoyl moiety of threonylcarbamoyl-AMP (TC-AMP) to the N6 group of A37, together with TsaE and TsaB. TsaD likely plays a direct catalytic role in this reaction. In Bartonella henselae (strain ATCC 49882 / DSM 28221 / CCUG 30454 / Houston 1) (Rochalimaea henselae), this protein is tRNA N6-adenosine threonylcarbamoyltransferase.